The chain runs to 310 residues: Aspartate carbamoyltransferase catalytic subunit (310 aa).

Residues Arg-55 and Thr-56 each coordinate carbamoyl phosphate. Lys-85 is a binding site for L-aspartate. 3 residues coordinate carbamoyl phosphate: Arg-106, His-135, and Gln-138. Positions 168 and 230 each coordinate L-aspartate. The carbamoyl phosphate site is built by Leu-268 and Pro-269.

The protein belongs to the aspartate/ornithine carbamoyltransferase superfamily. ATCase family. In terms of assembly, heterododecamer (2C3:3R2) of six catalytic PyrB chains organized as two trimers (C3), and six regulatory PyrI chains organized as three dimers (R2).

It catalyses the reaction carbamoyl phosphate + L-aspartate = N-carbamoyl-L-aspartate + phosphate + H(+). The protein operates within pyrimidine metabolism; UMP biosynthesis via de novo pathway; (S)-dihydroorotate from bicarbonate: step 2/3. Catalyzes the condensation of carbamoyl phosphate and aspartate to form carbamoyl aspartate and inorganic phosphate, the committed step in the de novo pyrimidine nucleotide biosynthesis pathway. This chain is Aspartate carbamoyltransferase catalytic subunit, found in Buchnera aphidicola subsp. Acyrthosiphon pisum (strain APS) (Acyrthosiphon pisum symbiotic bacterium).